Reading from the N-terminus, the 419-residue chain is Endothiapepsin (419 aa).

An N-terminal signal peptide occupies residues 1 to 20; the sequence is MSSPLKNALVTAMLAGGALS. A propeptide spans 21-89 (activation peptide); sequence SPTKQHVGIP…QNSTSGLAER (69 aa). A Peptidase A1 domain is found at 106–417; the sequence is YITPVQIGTP…GATTPTLGFA (312 aa). Catalysis depends on residues Asp124 and Ser288. Cysteines 344 and 379 form a disulfide.

Belongs to the peptidase A1 family.

It catalyses the reaction Hydrolysis of proteins with specificity similar to that of pepsin A, prefers hydrophobic residues at P1 and P1', but does not cleave 14-Ala-|-Leu-15 in the B chain of insulin or Z-Glu-Tyr. Clots milk.. The protein is Endothiapepsin (EAPA) of Cryphonectria parasitica (Chestnut blight fungus).